A 357-amino-acid polypeptide reads, in one-letter code: Alanine racemase (357 aa).

Catalysis depends on K33, which acts as the Proton acceptor; specific for D-alanine. K33 is subject to N6-(pyridoxal phosphate)lysine. Residue R129 participates in substrate binding. Y253 acts as the Proton acceptor; specific for L-alanine in catalysis. M301 provides a ligand contact to substrate.

The protein belongs to the alanine racemase family. It depends on pyridoxal 5'-phosphate as a cofactor.

It carries out the reaction L-alanine = D-alanine. The protein operates within amino-acid biosynthesis; D-alanine biosynthesis; D-alanine from L-alanine: step 1/1. In terms of biological role, catalyzes the interconversion of L-alanine and D-alanine. May also act on other amino acids. The sequence is that of Alanine racemase (alr) from Pseudomonas syringae pv. syringae (strain B728a).